The following is a 521-amino-acid chain: Alkyl hydroperoxide reductase subunit F (521 aa).

N6-acetyllysine is present on K53. 214 to 229 (DVLIVGSGPAGAAAAI) contacts FAD. C345 and C348 form a disulfide bridge. An N6-acetyllysine modification is found at K354. NAD(+) is bound at residue 357–371 (RVAVIGGGNSGVEAA). 478 to 488 (TNVKGVFAAGD) contacts FAD.

It belongs to the class-II pyridine nucleotide-disulfide oxidoreductase family. In terms of assembly, homodimer. Requires FAD as cofactor.

Serves to protect the cell against DNA damage by alkyl hydroperoxides. It can use either NADH or NADPH as electron donor for direct reduction of redox dyes or of alkyl hydroperoxides when combined with the AhpC protein. This is Alkyl hydroperoxide reductase subunit F (ahpF) from Escherichia coli (strain K12).